Here is a 189-residue protein sequence, read N- to C-terminus: Development-specific protein LVN1.2 (189 aa).

Endoderm cells.

This is Development-specific protein LVN1.2 from Lytechinus variegatus (Green sea urchin).